Consider the following 391-residue polypeptide: UPF0229 protein CLH_2838 (391 aa).

2 disordered regions span residues 1 to 23 (MAIF…DKRR) and 75 to 107 (VATG…GNEE). Positions 80 to 92 (GEEKRGDKIESGS) are enriched in basic and acidic residues.

It belongs to the UPF0229 family.

This Clostridium botulinum (strain Alaska E43 / Type E3) protein is UPF0229 protein CLH_2838.